The following is a 511-amino-acid chain: Dihydrolipoyl dehydrogenase, mitochondrial (511 aa).

FAD-binding positions include 75–84, Lys93, Gly157, and 187–189; these read EKRGTLGGTC and TGS. Cys84 and Cys89 are disulfide-bonded. Residues 224–231, Glu247, Leu281, and Gly316 each bind NAD(+); that span reads GGGIIGLE. FAD-binding positions include Asp357 and 363-366; that span reads MLAH. His489 acts as the Proton acceptor in catalysis.

This sequence belongs to the class-I pyridine nucleotide-disulfide oxidoreductase family. In terms of assembly, homodimer. It depends on FAD as a cofactor.

Its subcellular location is the mitochondrion matrix. It carries out the reaction N(6)-[(R)-dihydrolipoyl]-L-lysyl-[protein] + NAD(+) = N(6)-[(R)-lipoyl]-L-lysyl-[protein] + NADH + H(+). Functionally, lipoamide dehydrogenase is a component of the alpha-ketoacid dehydrogenase complexes. Malfunction of this protein blocks the progression of cell cycle from G1 to S phase. The protein is Dihydrolipoyl dehydrogenase, mitochondrial (dld1) of Schizosaccharomyces pombe (strain 972 / ATCC 24843) (Fission yeast).